A 302-amino-acid chain; its full sequence is tRNA dimethylallyltransferase (302 aa).

An ATP-binding site is contributed by 10–17; the sequence is GPTAIGKT. 12–17 is a substrate binding site; the sequence is TAIGKT. The interval 35–38 is interaction with substrate tRNA; it reads DSRQ.

The protein belongs to the IPP transferase family. As to quaternary structure, monomer. It depends on Mg(2+) as a cofactor.

The catalysed reaction is adenosine(37) in tRNA + dimethylallyl diphosphate = N(6)-dimethylallyladenosine(37) in tRNA + diphosphate. Catalyzes the transfer of a dimethylallyl group onto the adenine at position 37 in tRNAs that read codons beginning with uridine, leading to the formation of N6-(dimethylallyl)adenosine (i(6)A). This Christiangramia forsetii (strain DSM 17595 / CGMCC 1.15422 / KT0803) (Gramella forsetii) protein is tRNA dimethylallyltransferase.